The chain runs to 661 residues: Putative lipase ATG15 (661 aa).

Topologically, residues 1 to 3 are cytoplasmic; sequence MIW. The chain crosses the membrane as a helical; Signal-anchor for type II membrane protein span at residues 4–24; that stretch reads NGRLVLACVLLIAGCSGQVDA. The Lumenal portion of the chain corresponds to 25–661; sequence ARTREQRKAF…FDDFDPKNDL (637 aa). N-linked (GlcNAc...) asparagine glycans are attached at residues Asn-155, Asn-190, Asn-212, Asn-271, and Asn-295. Ser-311 serves as the catalytic Charge relay system. N-linked (GlcNAc...) asparagine glycosylation is present at Asn-457. 2 disordered regions span residues 492 to 559 and 574 to 597; these read ESTT…TSTS and TTTSATPKPSSTARTVTKTKTTTS. 3 stretches are compositionally biased toward low complexity: residues 493-513, 527-559, and 574-595; these read STTSAPTTSTSTSSSTSSTRT, TTTSSSSSISSPSATPAPTITTTSSLPTSTSTS, and TTTSATPKPSSTARTVTKTKTT.

Belongs to the AB hydrolase superfamily. Lipase family. In terms of assembly, binds to both phosphatidylinositol (PI) and phosphatidylinositol 3,5-bisphosphate (PIP2).

Its subcellular location is the endosome. It is found in the multivesicular body membrane. It localises to the prevacuolar compartment membrane. The catalysed reaction is a triacylglycerol + H2O = a diacylglycerol + a fatty acid + H(+). Lipase which is essential for lysis of subvacuolar cytoplasm to vacuole targeted bodies and intravacuolar autophagic bodies. Involved in the lysis of intravacuolar multivesicular body (MVB) vesicles. The intravacuolar membrane disintegration by ATG15 is critical to life span extension. This is Putative lipase ATG15 (ATG15) from Passalora fulva (Tomato leaf mold).